A 421-amino-acid polypeptide reads, in one-letter code: ATP-dependent RNA helicase RhlB (421 aa).

The Q motif signature appears at glutamine 9 to alanine 37. In terms of domain architecture, Helicase ATP-binding spans leucine 40–isoleucine 219. Residue alanine 53–threonine 60 participates in ATP binding. Residues aspartate 165–aspartate 168 carry the DEAD box motif. Positions arginine 245–methionine 390 constitute a Helicase C-terminal domain. Residues aspartate 392 to glycine 421 form a disordered region. A compositionally biased stretch (low complexity) spans proline 402–proline 414.

Belongs to the DEAD box helicase family. RhlB subfamily. Component of the RNA degradosome, which is a multiprotein complex involved in RNA processing and mRNA degradation.

It localises to the cytoplasm. The catalysed reaction is ATP + H2O = ADP + phosphate + H(+). Its function is as follows. DEAD-box RNA helicase involved in RNA degradation. Has RNA-dependent ATPase activity and unwinds double-stranded RNA. This is ATP-dependent RNA helicase RhlB from Escherichia coli O157:H7.